Consider the following 182-residue polypeptide: uncharacterized protein (182 aa).

Positions 1–177 (MEFSVGGVEV…KFLEVFKKHL (177 aa)) constitute a Macro domain.

This is an uncharacterized protein from Pyrobaculum aerophilum (strain ATCC 51768 / DSM 7523 / JCM 9630 / CIP 104966 / NBRC 100827 / IM2).